Here is a 712-residue protein sequence, read N- to C-terminus: Cadherin-13 (712 aa).

The N-terminal stretch at 1–22 (MQHKTQLTLSFLLSQVLLLACA) is a signal peptide. A propeptide spanning residues 23 to 138 (EDLECTPGFQ…GNLGIPRQKR (116 aa)) is cleaved from the precursor. An N-linked (GlcNAc...) asparagine glycan is attached at Asn86. 5 consecutive Cadherin domains span residues 143–245 (TPIL…RPMF), 246–363 (KEGP…PPEF), 364–477 (TKKE…GPVF), 478–585 (HPNP…VPSL), and 586–680 (YPTL…LQVC). N-linked (GlcNAc...) asparagine glycans are attached at residues Asn382, Asn500, Asn530, Asn638, and Asn671. Asp693 carries GPI-anchor amidated aspartate lipidation. Positions 694 to 712 (ALHISMTLILLSLFSLFCL) are cleaved as a propeptide — removed in mature form.

In terms of assembly, by contrast to classical cadherins, homodimerization in trans is not mediated by cadherin EC1 domain strand-swapping, but instead through a homophilic adhesive interface which joins two elongated EC1-EC2 domains through a region near their Ca2+-binding sites to form a tetrahedral, X-like shape. Neural tissues. Also found in muscles; kidney and retina.

The protein resides in the cell membrane. The protein localises to the cytoplasm. Cadherins are calcium-dependent cell adhesion proteins. They preferentially interact with themselves in a homophilic manner in connecting cells; cadherins may thus contribute to the sorting of heterogeneous cell types. May act as a negative regulator of neural cell growth. This Gallus gallus (Chicken) protein is Cadherin-13 (CDH13).